Reading from the N-terminus, the 400-residue chain is Tryptophan synthase beta chain (400 aa).

The residue at position 95 (Lys95) is an N6-(pyridoxal phosphate)lysine.

It belongs to the TrpB family. Tetramer of two alpha and two beta chains. Requires pyridoxal 5'-phosphate as cofactor.

The catalysed reaction is (1S,2R)-1-C-(indol-3-yl)glycerol 3-phosphate + L-serine = D-glyceraldehyde 3-phosphate + L-tryptophan + H2O. Its pathway is amino-acid biosynthesis; L-tryptophan biosynthesis; L-tryptophan from chorismate: step 5/5. In terms of biological role, the beta subunit is responsible for the synthesis of L-tryptophan from indole and L-serine. The chain is Tryptophan synthase beta chain from Chlorobaculum tepidum (strain ATCC 49652 / DSM 12025 / NBRC 103806 / TLS) (Chlorobium tepidum).